The chain runs to 282 residues: Digeranylgeranylglyceryl phosphate synthase (282 aa).

9 helical membrane passes run 15 to 35, 36 to 56, 81 to 100, 104 to 121, 131 to 151, 159 to 179, 201 to 221, 222 to 242, and 260 to 280; these read VIGA…WYLE, LKGI…GYVI, VNKA…ALSI, IYAL…IYYA, GNLL…LAFF, IIIP…VKGI, KSWR…PLPF, FIGF…PFTI, and YLKI…LPFF.

It belongs to the UbiA prenyltransferase family. DGGGP synthase subfamily. Mg(2+) serves as cofactor. The cofactor is Ca(2+).

It localises to the cell membrane. The catalysed reaction is sn-3-O-(geranylgeranyl)glycerol 1-phosphate + (2E,6E,10E)-geranylgeranyl diphosphate = 2,3-bis-O-(geranylgeranyl)-sn-glycerol 1-phosphate + diphosphate. Its pathway is membrane lipid metabolism; glycerophospholipid metabolism. Inhibited by EDTA in vitro. Prenyltransferase that catalyzes the transfer of the geranylgeranyl moiety of geranylgeranyl diphosphate (GGPP) to the C2 hydroxyl of (S)-3-O-geranylgeranylglyceryl phosphate (GGGP). This reaction is the second ether-bond-formation step in the biosynthesis of archaeal membrane lipids. Cannot use other prenyl donors, i.e. farnesyl diphosphate (FPP) and phytyl diphosphate. Moreover, 4-hydroxybenzoate, 1,4-dihydroxy 2-naphthoate, homogentisate, and alpha-glycerophosphate do not function as prenyl acceptor substrates. This is Digeranylgeranylglyceryl phosphate synthase (ubiA-2) from Saccharolobus solfataricus (strain ATCC 35092 / DSM 1617 / JCM 11322 / P2) (Sulfolobus solfataricus).